The sequence spans 206 residues: HTH-type transcriptional regulator BetI (206 aa).

In terms of domain architecture, HTH tetR-type spans 8–68 (PLRRKALVDA…ETIRSLLRDL (61 aa)). The H-T-H motif DNA-binding region spans 31-50 (TMSDIAREAGVSAALAHHYF).

It participates in amine and polyamine biosynthesis; betaine biosynthesis via choline pathway [regulation]. Repressor involved in the biosynthesis of the osmoprotectant glycine betaine. It represses transcription of the choline transporter BetT and the genes of BetAB involved in the synthesis of glycine betaine. The chain is HTH-type transcriptional regulator BetI from Agrobacterium fabrum (strain C58 / ATCC 33970) (Agrobacterium tumefaciens (strain C58)).